The following is a 20-amino-acid chain: Phospholipase A2 homolog P-elapitoxin-Aa1a gamma chain (20 aa).

The protein belongs to the phospholipase A2 family. Group I subfamily. Heterotrimer of alpha, beta and gamma chains, each related to PLA2. Glycosylated. Expressed by the venom gland.

The protein resides in the secreted. Functionally, heterotrimer: Snake venom phospholipase A2 (PLA2) that has presynaptic neurotoxicity. Inhibits nerve-evoked twitch contractions but not responses to cholinergic agonists acetylcholine and carbachol and to depolarizing agonist KCl. Causes a fade in tetanic contractions. Displays a triphasic mode of action with depression, enhancement and blockade of neurotransmission. Does not display myotoxic activity such as changes in baseline muscle tension or inhibition of directly stimulated muscle twitches. All subunits are necessary for maximum toxicity. Monomer: the gamma chain has no significant enzymatic activity and is not toxic by itself. The protein is Phospholipase A2 homolog P-elapitoxin-Aa1a gamma chain of Acanthophis antarcticus (Common death adder).